The chain runs to 59 residues: Large ribosomal subunit protein bL32 (59 aa).

The protein belongs to the bacterial ribosomal protein bL32 family.

The protein is Large ribosomal subunit protein bL32 of Mycoplasma capricolum subsp. capricolum (strain California kid / ATCC 27343 / NCTC 10154).